Here is a 42-residue protein sequence, read N- to C-terminus: Photosystem I reaction center subunit IX (42 aa).

Residues 7-27 (FLSSAPVLIMALLTFTAGILI) form a helical membrane-spanning segment.

Belongs to the PsaJ family.

Its subcellular location is the cellular thylakoid membrane. May help in the organization of the PsaE and PsaF subunits. This Microcystis aeruginosa (strain NIES-843 / IAM M-2473) protein is Photosystem I reaction center subunit IX.